The sequence spans 146 residues: Flagellar assembly factor FliW 1 (146 aa).

Belongs to the FliW family. Interacts with translational regulator CsrA and flagellin(s).

The protein resides in the cytoplasm. Functionally, acts as an anti-CsrA protein, binds CsrA and prevents it from repressing translation of its target genes, one of which is flagellin. Binds to flagellin and participates in the assembly of the flagellum. The protein is Flagellar assembly factor FliW 1 of Helicobacter hepaticus (strain ATCC 51449 / 3B1).